Consider the following 621-residue polypeptide: Methionine--tRNA ligase (621 aa).

Residues 11–21 carry the 'HIGH' region motif; it reads PYANGPRHIGH. Positions 143, 146, 156, and 159 each coordinate Zn(2+). Positions 347 to 351 match the 'KMSKS' region motif; that stretch reads KFSSS. Ser350 contacts ATP.

It belongs to the class-I aminoacyl-tRNA synthetase family. MetG type 1 subfamily. As to quaternary structure, monomer. It depends on Zn(2+) as a cofactor.

The protein localises to the cytoplasm. It catalyses the reaction tRNA(Met) + L-methionine + ATP = L-methionyl-tRNA(Met) + AMP + diphosphate. Functionally, is required not only for elongation of protein synthesis but also for the initiation of all mRNA translation through initiator tRNA(fMet) aminoacylation. The sequence is that of Methionine--tRNA ligase from Bifidobacterium longum subsp. infantis (strain ATCC 15697 / DSM 20088 / JCM 1222 / NCTC 11817 / S12).